Consider the following 1315-residue polypeptide: Serine-aspartate repeat-containing protein D (1315 aa).

The first 35 residues, 1 to 35 (MLNRENKTAITRKGMVSNRLNKFSIRKYTVGTASI), serve as a signal peptide directing secretion. The YSIRK-G/S signaling motif signature appears at 23–34 (FSIRKYTVGTAS). The interval 36–568 (LVGTTLIFGL…NNQSGGAGQE (533 aa)) is ligand binding A region. The disordered stretch occupies residues 54–185 (ESTNKELNEA…NKKVDAKTES (132 aa)). 2 stretches are compositionally biased toward polar residues: residues 62 to 71 (EATTSASDNQ) and 94 to 108 (EMVS…SNGN). The span at 130–145 (KSDEQASPKSTNEDLN) shows a compositional bias: basic and acidic residues. Polar residues-rich tracts occupy residues 146–155 (TKQTISNQEA) and 163–173 (NKSVVNVQPTN). Residues 174–183 (EENKKVDAKT) show a composition bias toward basic and acidic residues. CNA-B domains follow at residues 569 to 680 (VYKI…IYKP), 681 to 791 (KYNL…YKTP), 792 to 901 (KYNL…FYKP), 902 to 1012 (TYNL…YKTP), and 1013 to 1123 (KYSL…EEET). 3 disordered regions span residues 857–883 (ETPS…TSTT), 972–992 (YTPT…GLTT), and 1078–1291 (EKPA…SNNA). 2 stretches are compositionally biased toward polar residues: residues 860-869 (SGYTPTQVGS) and 972-981 (YTPTSVTSGN). Acidic residues-rich tracts occupy residues 1091-1101 (TEDDKDADGGE), 1118-1134 (YYEE…DSDS), 1142-1164 (SDSD…DSDS), and 1172-1254 (SDSD…DSDS). Residues 1278–1282 (LPETG) carry the LPXTG sorting signal motif. Pentaglycyl murein peptidoglycan amidated threonine is present on Thr-1281. Residues 1282-1315 (GNENSGSNNATLFGGLFAALGSLLLFGRRKKQNK) constitute a propeptide, removed by sortase.

The protein belongs to the serine-aspartate repeat-containing protein (SDr) family. Interacts with host DSG1; this interaction increases S.aureus adherence to keratinocytes. Post-translationally, anchored to the cell wall by sortase A.

It is found in the secreted. It localises to the cell wall. Cell surface-associated calcium-binding protein which plays an important role in adhesion and pathogenesis. Mediates interactions with components of the extracellular matrix such as host DSG1 to promote bacterial adhesion to host cells. Contributes to the resistance to killing by innate immune components such as neutrophils present in blood and thus attenuates bacterial clearance. This chain is Serine-aspartate repeat-containing protein D (sdrD), found in Staphylococcus aureus (strain Newman).